The following is a 362-amino-acid chain: Phosphoserine aminotransferase (362 aa).

Arg43 contacts L-glutamate. Residues 77-78 (AT), Trp103, Thr153, Asp173, and Gln196 contribute to the pyridoxal 5'-phosphate site. Lys197 bears the N6-(pyridoxal phosphate)lysine mark. A pyridoxal 5'-phosphate-binding site is contributed by 238-239 (NT).

The protein belongs to the class-V pyridoxal-phosphate-dependent aminotransferase family. SerC subfamily. In terms of assembly, homodimer. Requires pyridoxal 5'-phosphate as cofactor.

Its subcellular location is the cytoplasm. It catalyses the reaction O-phospho-L-serine + 2-oxoglutarate = 3-phosphooxypyruvate + L-glutamate. The catalysed reaction is 4-(phosphooxy)-L-threonine + 2-oxoglutarate = (R)-3-hydroxy-2-oxo-4-phosphooxybutanoate + L-glutamate. Its pathway is amino-acid biosynthesis; L-serine biosynthesis; L-serine from 3-phospho-D-glycerate: step 2/3. It participates in cofactor biosynthesis; pyridoxine 5'-phosphate biosynthesis; pyridoxine 5'-phosphate from D-erythrose 4-phosphate: step 3/5. In terms of biological role, catalyzes the reversible conversion of 3-phosphohydroxypyruvate to phosphoserine and of 3-hydroxy-2-oxo-4-phosphonooxybutanoate to phosphohydroxythreonine. The chain is Phosphoserine aminotransferase from Xylella fastidiosa (strain 9a5c).